The chain runs to 273 residues: Trypsin-6 (273 aa).

A signal peptide spans 1–22 (MLSKFTAILLAVHIALFACALT). A propeptide spans 23–46 (QAEKRHKLTRPAFHPNAPYLAGKR) (activation peptide). Residues 47–272 (IVGGFVIDIS…VRDWIRETSG (226 aa)) enclose the Peptidase S1 domain. Residues Cys72 and Cys88 are joined by a disulfide bond. Residues His87 and Asp132 each act as charge relay system in the active site. Intrachain disulfides connect Cys197/Cys213 and Cys224/Cys248. Residue Ser228 is the Charge relay system of the active site.

This sequence belongs to the peptidase S1 family. In terms of tissue distribution, expressed in the midgut. Expression levels drop a few hours after blood feeding and pick up again 28 hours later.

It localises to the secreted. The catalysed reaction is Preferential cleavage: Arg-|-Xaa, Lys-|-Xaa.. Its function is as follows. Constitutive trypsin that is expressed 2 days after emergence, coinciding with host seeking behavior of the female. This is Trypsin-6 (TRYP6) from Anopheles gambiae (African malaria mosquito).